The chain runs to 209 residues: Small ribosomal subunit protein uS5 (209 aa).

The S5 DRBM domain occupies 48–111 (LEDEVLDINM…DAAKLNITYI (64 aa)).

Belongs to the universal ribosomal protein uS5 family. As to quaternary structure, part of the 30S ribosomal subunit. Contacts protein S4.

With S4 and S12 plays an important role in translational accuracy. This Methanosarcina mazei (strain ATCC BAA-159 / DSM 3647 / Goe1 / Go1 / JCM 11833 / OCM 88) (Methanosarcina frisia) protein is Small ribosomal subunit protein uS5.